The chain runs to 148 residues: Large ribosomal subunit protein bL9 (148 aa).

Belongs to the bacterial ribosomal protein bL9 family.

In terms of biological role, binds to the 23S rRNA. This chain is Large ribosomal subunit protein bL9, found in Coprothermobacter proteolyticus (strain ATCC 35245 / DSM 5265 / OCM 4 / BT).